Here is a 416-residue protein sequence, read N- to C-terminus: Phosphoglycerate kinase (416 aa).

(2R)-3-phosphoglycerate is bound by residues Val-23, Asp-24, Phe-25, Asn-26, Asn-38, Arg-39, Ser-62, His-63, Gly-65, Arg-66, Leu-121, Arg-122, His-169, and Arg-170. ADP is bound at residue Gly-213. A CDP-binding site is contributed by Gly-213. The AMP site is built by Ala-214 and Lys-215. ATP is bound by residues Ala-214 and Lys-215. A Mg(2+)-binding site is contributed by Ala-214. CDP is bound at residue Asp-218. Residue Asp-218 coordinates Mg(2+). Lys-219 contributes to the AMP binding site. Lys-219 is a binding site for ATP. Position 237 (Gly-237) interacts with ADP. Gly-237 contacts CDP. AMP contacts are provided by Gly-238 and Gly-312. Gly-238 and Gly-312 together coordinate ATP. CDP-binding residues include Gly-337 and Phe-342. Phe-342 is a binding site for ADP. Glu-343 is a binding site for AMP. Asp-374 contacts Mg(2+). Residue Thr-375 coordinates ATP.

This sequence belongs to the phosphoglycerate kinase family. In terms of assembly, monomer. Mg(2+) is required as a cofactor.

The catalysed reaction is (2R)-3-phosphoglycerate + ATP = (2R)-3-phospho-glyceroyl phosphate + ADP. It functions in the pathway carbohydrate degradation; glycolysis; pyruvate from D-glyceraldehyde 3-phosphate: step 2/5. The sequence is that of Phosphoglycerate kinase (PGK) from Plasmodium falciparum (isolate 3D7).